The following is a 471-amino-acid chain: Tryptophanase (471 aa).

Lys270 carries the N6-(pyridoxal phosphate)lysine modification.

The protein belongs to the beta-eliminating lyase family. As to quaternary structure, homotetramer. Pyridoxal 5'-phosphate serves as cofactor.

The catalysed reaction is L-tryptophan + H2O = indole + pyruvate + NH4(+). The protein operates within amino-acid degradation; L-tryptophan degradation via pyruvate pathway; indole and pyruvate from L-tryptophan: step 1/1. This is Tryptophanase from Histophilus somni (strain 2336) (Haemophilus somnus).